The chain runs to 128 residues: Diacylglycerol kinase (128 aa).

Glu-34 provides a ligand contact to a divalent metal cation. The next 2 membrane-spanning stretches (helical) occupy residues 35 to 55 and 58 to 78; these read SAFRQIVILALFCIVLASYLA and FLEWGLLILPCFLSVVVELIN. Glu-75 (proton acceptor) is an active-site residue. Glu-82 is an a divalent metal cation binding site. Residues 107-127 traverse the membrane as a helical segment; sequence QLIGLIFWTLIWGRYLLALYL.

Belongs to the bacterial diacylglycerol kinase family. Mg(2+) is required as a cofactor.

The protein resides in the cell inner membrane. It carries out the reaction a 1,2-diacyl-sn-glycerol + ATP = a 1,2-diacyl-sn-glycero-3-phosphate + ADP + H(+). Its function is as follows. Catalyzes the ATP-dependent phosphorylation of sn-l,2-diacylglycerol (DAG) to phosphatidic acid. Involved in the recycling of diacylglycerol produced as a by-product during membrane-derived oligosaccharide (MDO) biosynthesis. The polypeptide is Diacylglycerol kinase (dgkA) (Helicobacter pylori (strain ATCC 700392 / 26695) (Campylobacter pylori)).